The following is a 123-amino-acid chain: Large ribosomal subunit protein bL12 (123 aa).

The protein belongs to the bacterial ribosomal protein bL12 family. Homodimer. Part of the ribosomal stalk of the 50S ribosomal subunit. Forms a multimeric L10(L12)X complex, where L10 forms an elongated spine to which 2 to 4 L12 dimers bind in a sequential fashion. Binds GTP-bound translation factors.

Forms part of the ribosomal stalk which helps the ribosome interact with GTP-bound translation factors. Is thus essential for accurate translation. This Zymomonas mobilis subsp. mobilis (strain ATCC 31821 / ZM4 / CP4) protein is Large ribosomal subunit protein bL12.